The following is a 313-amino-acid chain: Ornithine carbamoyltransferase (313 aa).

Carbamoyl phosphate is bound by residues 57-60 (STRT), arginine 108, and 135-138 (HPTQ). L-ornithine-binding positions include asparagine 167, aspartate 231, and 235–236 (SM). Carbamoyl phosphate-binding positions include 272-273 (CL) and arginine 300.

This sequence belongs to the aspartate/ornithine carbamoyltransferase superfamily. OTCase family.

It is found in the cytoplasm. It catalyses the reaction carbamoyl phosphate + L-ornithine = L-citrulline + phosphate + H(+). It participates in amino-acid biosynthesis; L-arginine biosynthesis; L-arginine from L-ornithine and carbamoyl phosphate: step 1/3. Reversibly catalyzes the transfer of the carbamoyl group from carbamoyl phosphate (CP) to the N(epsilon) atom of ornithine (ORN) to produce L-citrulline. The chain is Ornithine carbamoyltransferase from Thermotoga maritima (strain ATCC 43589 / DSM 3109 / JCM 10099 / NBRC 100826 / MSB8).